A 75-amino-acid chain; its full sequence is Conotoxin ar11a (75 aa).

A signal peptide spans 1–19; that stretch reads MKLCATFLLVLVTLPLVTG. The propeptide occupies 20-36; it reads EKSSERSLSGAILRGVR. 4 disulfide bridges follow: Cys-39–Cys-53, Cys-46–Cys-58, Cys-52–Cys-63, and Cys-57–Cys-70.

Expressed by the venom duct.

Its subcellular location is the secreted. Functionally, both natural (L-Leu form) and synthetic (D-Leu from) peptides equally cause sensitivity to touch and body tremor. Neither L-Leu form nor D-Leu form is active on nerve-muscle preparation. In Conus arenatus (Sand-dusted cone), this protein is Conotoxin ar11a.